The chain runs to 286 residues: ATP synthase gamma chain (286 aa).

This sequence belongs to the ATPase gamma chain family. As to quaternary structure, F-type ATPases have 2 components, CF(1) - the catalytic core - and CF(0) - the membrane proton channel. CF(1) has five subunits: alpha(3), beta(3), gamma(1), delta(1), epsilon(1). CF(0) has three main subunits: a, b and c.

Its subcellular location is the cell inner membrane. Functionally, produces ATP from ADP in the presence of a proton gradient across the membrane. The gamma chain is believed to be important in regulating ATPase activity and the flow of protons through the CF(0) complex. In Shewanella denitrificans (strain OS217 / ATCC BAA-1090 / DSM 15013), this protein is ATP synthase gamma chain.